We begin with the raw amino-acid sequence, 806 residues long: DNA topoisomerase 4 subunit A (806 aa).

Residues 33-499 (LPDARDGLKP…EEIKINLEVM (467 aa)) enclose the Topo IIA-type catalytic domain. The active-site O-(5'-phospho-DNA)-tyrosine intermediate is the Y121.

Belongs to the type II topoisomerase GyrA/ParC subunit family. ParC type 2 subfamily. As to quaternary structure, heterotetramer composed of ParC and ParE.

It localises to the cell membrane. It is found in the cytoplasm. The catalysed reaction is ATP-dependent breakage, passage and rejoining of double-stranded DNA.. Functionally, topoisomerase IV is essential for chromosome segregation. It relaxes supercoiled DNA. Performs the decatenation events required during the replication of a circular DNA molecule. This Bacillus subtilis (strain 168) protein is DNA topoisomerase 4 subunit A.